The chain runs to 233 residues: Large ribosomal subunit protein uL1 (233 aa).

It belongs to the universal ribosomal protein uL1 family. Part of the 50S ribosomal subunit.

Its function is as follows. Binds directly to 23S rRNA. The L1 stalk is quite mobile in the ribosome, and is involved in E site tRNA release. Functionally, protein L1 is also a translational repressor protein, it controls the translation of the L11 operon by binding to its mRNA. The chain is Large ribosomal subunit protein uL1 from Brucella anthropi (strain ATCC 49188 / DSM 6882 / CCUG 24695 / JCM 21032 / LMG 3331 / NBRC 15819 / NCTC 12168 / Alc 37) (Ochrobactrum anthropi).